The sequence spans 350 residues: Probable nicotinate-nucleotide adenylyltransferase/Ap4A hydrolase (350 aa).

The naMN adenylyltransferase stretch occupies residues 1-187 (MKQKIIIFGG…YINTNHLYLI (187 aa)). The ap4A hydrolase stretch occupies residues 196-350 (DKRFQHCLRV…LKYVQNLVKD (155 aa)). The HD domain occupies 198–310 (RFQHCLRVGK…VYLADKLEPN (113 aa)). His201 contributes to the ADP binding site. Residues His201, His230, and Asp231 each contribute to the Fe cation site. ADP contacts are provided by residues 231–234 (DLAK), His261, 287–288 (HT), Asp305, and Arg311. Asp305 contributes to the Fe cation binding site.

It in the N-terminal section; belongs to the NadD family. In the C-terminal section; belongs to the Ap4A hydrolase YqeK family.

It catalyses the reaction nicotinate beta-D-ribonucleotide + ATP + H(+) = deamido-NAD(+) + diphosphate. The enzyme catalyses P(1),P(4)-bis(5'-adenosyl) tetraphosphate + H2O = 2 ADP + 2 H(+). The protein operates within cofactor biosynthesis; NAD(+) biosynthesis; deamido-NAD(+) from nicotinate D-ribonucleotide: step 1/1. In terms of biological role, catalyzes the reversible adenylation of nicotinate mononucleotide (NaMN) to nicotinic acid adenine dinucleotide (NaAD). Functionally, hydrolyzes diadenosine 5',5'''-P1,P4-tetraphosphate (Ap4A) to yield ADP. In Mycoplasma genitalium (strain ATCC 33530 / DSM 19775 / NCTC 10195 / G37) (Mycoplasmoides genitalium), this protein is Probable nicotinate-nucleotide adenylyltransferase/Ap4A hydrolase.